Consider the following 714-residue polypeptide: Polyribonucleotide nucleotidyltransferase (714 aa).

Residues D496 and D502 each coordinate Mg(2+). A KH domain is found at 562-621 (PRLLTIKIDPDLIGMVIGPGGKTIKGITEQTRAKVDIADDGTVTIASSESENAEKAKRLI). The region spanning 631-699 (GDVYFGKVTR…NKGRINLTRL (69 aa)) is the S1 motif domain.

The protein belongs to the polyribonucleotide nucleotidyltransferase family. It depends on Mg(2+) as a cofactor.

It is found in the cytoplasm. The catalysed reaction is RNA(n+1) + phosphate = RNA(n) + a ribonucleoside 5'-diphosphate. Its function is as follows. Involved in mRNA degradation. Catalyzes the phosphorolysis of single-stranded polyribonucleotides processively in the 3'- to 5'-direction. In Picosynechococcus sp. (strain ATCC 27264 / PCC 7002 / PR-6) (Agmenellum quadruplicatum), this protein is Polyribonucleotide nucleotidyltransferase.